The primary structure comprises 514 residues: Probable lysine--tRNA ligase, cytoplasmic (514 aa).

This sequence belongs to the class-II aminoacyl-tRNA synthetase family. In terms of assembly, homodimer.

It localises to the cytoplasm. The catalysed reaction is tRNA(Lys) + L-lysine + ATP = L-lysyl-tRNA(Lys) + AMP + diphosphate. This chain is Probable lysine--tRNA ligase, cytoplasmic, found in Vairimorpha ceranae (strain BRL01) (Microsporidian parasite).